The primary structure comprises 275 residues: Putative phosphoenolpyruvate synthase regulatory protein (275 aa).

Residue 157-164 (GVSRCGKT) coordinates ADP.

It belongs to the pyruvate, phosphate/water dikinase regulatory protein family. PSRP subfamily.

It carries out the reaction [pyruvate, water dikinase] + ADP = [pyruvate, water dikinase]-phosphate + AMP + H(+). The catalysed reaction is [pyruvate, water dikinase]-phosphate + phosphate + H(+) = [pyruvate, water dikinase] + diphosphate. Bifunctional serine/threonine kinase and phosphorylase involved in the regulation of the phosphoenolpyruvate synthase (PEPS) by catalyzing its phosphorylation/dephosphorylation. The sequence is that of Putative phosphoenolpyruvate synthase regulatory protein from Bordetella pertussis (strain Tohama I / ATCC BAA-589 / NCTC 13251).